Here is a 191-residue protein sequence, read N- to C-terminus: Dephospho-CoA kinase (191 aa).

The DPCK domain maps to 3-191 (AIGITGSYAS…NLIANLECRV (189 aa)). Position 11-16 (11-16 (ASGKTF)) interacts with ATP.

The protein belongs to the CoaE family.

It is found in the cytoplasm. It carries out the reaction 3'-dephospho-CoA + ATP = ADP + CoA + H(+). Its pathway is cofactor biosynthesis; coenzyme A biosynthesis; CoA from (R)-pantothenate: step 5/5. Its function is as follows. Catalyzes the phosphorylation of the 3'-hydroxyl group of dephosphocoenzyme A to form coenzyme A. The chain is Dephospho-CoA kinase from Rickettsia bellii (strain RML369-C).